Reading from the N-terminus, the 130-residue chain is Protein ApaG (130 aa).

Residues 3-127 (EHESCGVRIS…FSLDRPSDRL (125 aa)) enclose the ApaG domain.

The sequence is that of Protein ApaG from Maricaulis maris (strain MCS10) (Caulobacter maris).